We begin with the raw amino-acid sequence, 136 residues long: Large ribosomal subunit protein uL16c (136 aa).

It belongs to the universal ribosomal protein uL16 family. As to quaternary structure, part of the 50S ribosomal subunit.

It localises to the plastid. Its subcellular location is the chloroplast. The chain is Large ribosomal subunit protein uL16c from Buxus microphylla (Littleleaf boxwood).